A 466-amino-acid polypeptide reads, in one-letter code: Adenosylhomocysteinase (466 aa).

Substrate contacts are provided by threonine 57, aspartate 132, and glutamate 192. An NAD(+)-binding site is contributed by 193–195; that stretch reads TTT. Substrate is bound by residues lysine 222 and aspartate 226. Residues asparagine 227, 256-261, glutamate 279, asparagine 314, 335-337, and asparagine 380 each bind NAD(+); these read GYGDVG and IGH.

The protein belongs to the adenosylhomocysteinase family. Requires NAD(+) as cofactor.

The protein resides in the cytoplasm. The enzyme catalyses S-adenosyl-L-homocysteine + H2O = L-homocysteine + adenosine. It functions in the pathway amino-acid biosynthesis; L-homocysteine biosynthesis; L-homocysteine from S-adenosyl-L-homocysteine: step 1/1. May play a key role in the regulation of the intracellular concentration of adenosylhomocysteine. The polypeptide is Adenosylhomocysteinase (Brucella abortus (strain S19)).